Reading from the N-terminus, the 340-residue chain is MTDHALLLVNLGSPASTQVADVRSYLNQFLMDPYVIDLPWPVRRLLVSLILIKRPEQSAHAYASIWWDEGSPLVVLSKRLQQAMKKEWSHGPVELAMRYGEPSIETVLTRLSEQGFKKVTLAPLYPQFADSTVTTVIEEAKRVVRAKSLKMQFSVLQPFYDQPEYLSALVESVRPHLEQPYDHLLLSFHGLPERHLHKLDPTGKHCLKDDCCMTAPAEVLATCYRAQCIQSAATFAKRMGIPDGKWSVSFQSRLGRAKWIEPYTEARLDELAAQGVKRLLVMCPAFVADCIETLEEIGDRGAEQFKEAGGEELVLVPCLNDDPNWAKELNRLCERAPLML.

Fe cation is bound by residues His-189 and Glu-292.

It belongs to the ferrochelatase family.

Its subcellular location is the cytoplasm. It catalyses the reaction heme b + 2 H(+) = protoporphyrin IX + Fe(2+). The protein operates within porphyrin-containing compound metabolism; protoheme biosynthesis; protoheme from protoporphyrin-IX: step 1/1. Its function is as follows. Catalyzes the ferrous insertion into protoporphyrin IX. The chain is Ferrochelatase from Pseudomonas savastanoi pv. phaseolicola (strain 1448A / Race 6) (Pseudomonas syringae pv. phaseolicola (strain 1448A / Race 6)).